The chain runs to 106 residues: Cell division topological specificity factor (106 aa).

The protein belongs to the MinE family.

Its function is as follows. Prevents the cell division inhibition by proteins MinC and MinD at internal division sites while permitting inhibition at polar sites. This ensures cell division at the proper site by restricting the formation of a division septum at the midpoint of the long axis of the cell. The sequence is that of Cell division topological specificity factor from Prochlorococcus marinus subsp. pastoris (strain CCMP1986 / NIES-2087 / MED4).